Reading from the N-terminus, the 293-residue chain is Ribonuclease Z (293 aa).

7 residues coordinate Zn(2+): His60, His62, Asp64, His65, His132, Asp200, and His256. The active-site Proton acceptor is the Asp64.

This sequence belongs to the RNase Z family. In terms of assembly, homodimer. Zn(2+) is required as a cofactor.

It carries out the reaction Endonucleolytic cleavage of RNA, removing extra 3' nucleotides from tRNA precursor, generating 3' termini of tRNAs. A 3'-hydroxy group is left at the tRNA terminus and a 5'-phosphoryl group is left at the trailer molecule.. Its function is as follows. Zinc phosphodiesterase, which displays some tRNA 3'-processing endonuclease activity. Probably involved in tRNA maturation, by removing a 3'-trailer from precursor tRNA. This chain is Ribonuclease Z, found in Sulfurisphaera tokodaii (strain DSM 16993 / JCM 10545 / NBRC 100140 / 7) (Sulfolobus tokodaii).